The following is a 590-amino-acid chain: L-asparaginase (590 aa).

In terms of domain architecture, Asparaginase/glutaminase spans 6–357; it reads AHVLVLYTGG…VEKKAMMVKN (352 aa). Thr-16 serves as the catalytic O-isoaspartyl threonine intermediate. Positions 44 to 351 are asparaginase; the sequence is NDDDYVSTYY…KDCWELVEKK (308 aa). Substrate is bound by residues 85 to 87 and 117 to 118; these read DSS and TD. ANK repeat units lie at residues 398–427, 431–460, 497–526, and 530–559; these read IFPQLLCYAASNGDIEMLKALHENGVDLSV, NGRNALHVAASAGHVGAVKYLLTQGVSFHL, RLGVELCLCASYGDTETLNSWLAAGADINQ, and NGETALHIAVKSRNKQLVHYLLDRDADPYK.

This sequence in the N-terminal section; belongs to the asparaginase 1 family. May be present in the larval cuticle.

The enzyme catalyses L-asparagine + H2O = L-aspartate + NH4(+). The chain is L-asparaginase from Dirofilaria immitis (Canine heartworm).